The chain runs to 398 residues: Phospholipase C (398 aa).

Residues Met1–Ala26 form the signal peptide. 9 residues coordinate Zn(2+): Trp27, His37, Asp82, His94, His152, Asp156, His162, His174, and Glu178. The Zn-dependent PLC domain occupies Trp27–Asp276. Positions Asn273–Thr281 are linker. Residues Asn282–Lys398 enclose the PLAT domain. Gly297, Thr298, Asp299, Asp319, Asn320, Gly322, Asn323, Asp324, and Asp363 together coordinate Ca(2+).

This sequence belongs to the bacterial zinc-metallophospholipase C family. The cofactor is Ca(2+). Zn(2+) serves as cofactor.

The protein localises to the secreted. It catalyses the reaction a 1,2-diacyl-sn-glycero-3-phosphocholine + H2O = phosphocholine + a 1,2-diacyl-sn-glycerol + H(+). Bacterial hemolysins are exotoxins that attack blood cell membranes and cause cell rupture. Binds to eukaryotic membranes where it hydrolyzes phosphatidylcholine. This enzyme has 10-fold less activity towards sphingomyelin than its C.perfringens counterpart, is approximately 100-fold less hemolytic against mouse erythrocytes and at least 100-fold less toxic in mice. The protein is Phospholipase C (plc) of Paraclostridium bifermentans (Clostridium bifermentans).